We begin with the raw amino-acid sequence, 851 residues long: Transcriptional regulator RFX1 (851 aa).

Polar residues-rich tracts occupy residues 1-11 (MSSDQTPQNRN) and 20-34 (PRLQ…STGP). Disordered regions lie at residues 1-121 (MSSD…EPHP), 134-170 (QSQF…PQTY), and 195-230 (HEAS…TGEN). Over residues 38 to 53 (QQRERSQEQESDHEHQ) the composition is skewed to basic and acidic residues. Positions 54 to 84 (QAQQHLHQFQQSNLTPSTTAFPSSTSIPTFS) are enriched in low complexity. The span at 85–114 (KQDQGYHNQFSSPQSSYRKIGNFAQSSNAP) shows a compositional bias: polar residues. The segment covering 141–170 (YSSPYIGQSQSQSQSQSQAQPQPHPQPQTY) has biased composition (low complexity). Over residues 199-211 (SADNDSATNITTP) the composition is skewed to polar residues. A DNA-binding region (RFX-type winged-helix) is located at residues 282–357 (GMVWLLNSCD…YHYCGIKLTG (76 aa)). Disordered stretches follow at residues 368–411 (YQQK…SVSY) and 783–806 (PPSL…TGTQ). Over residues 384–393 (AQVGSSTSSA) the composition is skewed to polar residues. Low complexity predominate over residues 783–797 (PPSLSSLPQTQQQNP).

Belongs to the RFX family.

It is found in the nucleus. Transcription factor involved in DNA damage responses, morphogenesis, and virulence. The polypeptide is Transcriptional regulator RFX1 (RFX1) (Candida albicans (strain SC5314 / ATCC MYA-2876) (Yeast)).